The primary structure comprises 744 residues: MDHAEENEIPAETQKYLVERPIFSHPVLQERLHVKDKVTDSIGDKLKQAFTCTPKKVRNIIYMFLPITKWLPAYKFKEYVLGDLVSGISTGVLQLPQGLAFAMLAAVPPVFGLYSSFYPVIMYCFFGTSRHISIGPFAVISLMIGGVAVRLVPDDIVIPGGVNATNGTEARDALRVKVAMSVTLLSGIIQFCLGVCRFGFVAIYLTEPLVRGFTTAAAVHVFTSMLKYLFGVKTKRYSGIFSVVYSTVAVLQNVKNLNVCSLGVGLMVFGLLLGGKEFNERFKEKLPAPIPLEFFAVVMGTGISAGFNLHESYSVDVVGTLPLGLLPPANPDTSLFHLVYVDAIAIAIVGFSVTISMAKTLANKHGYQVDGNQELIALGICNSIGSLFQTFSISCSLSRSLVQEGTGGKTQLAGCLASLMILLVILATGFLFESLPQAVLSAIVIVNLKGMFMQFSDLPFFWRTSKIELTIWLTTFVSSLFLGLDYGLITAVIIALLTVIYRTQSPSYTVLGQLPDTDVYIDIDAYEEVKEIPGIKIFQINAPIYYANSDLYSSALKRKTGVNPAIIMGARRKAMRKYAKEVGNANIANATVVKVDAEVDGENATKPEEEDDEVKFPPIVIKTTFPEELQRFLPQGENIHTVILDFTQVNFMDSVGVKTLAGIVKEYGDVGIYVYLAGCSAQVVNDLTSNRFFENPALKELLFHSIHDAVLGSQVREAMAEQETTVLPPQEDMEPNATPTTPEA.

The Cytoplasmic segment spans residues 1–75 (MDHAEENEIP…PITKWLPAYK (75 aa)). A helical membrane pass occupies residues 76–104 (FKEYVLGDLVSGISTGVLQLPQGLAFAML). The Extracellular portion of the chain corresponds to 105–108 (AAVP). The chain crosses the membrane as a helical span at residues 109 to 126 (PVFGLYSSFYPVIMYCFF). Over 127–137 (GTSRHISIGPF) the chain is Cytoplasmic. A helical transmembrane segment spans residues 138–149 (AVISLMIGGVAV). Residues 150–168 (RLVPDDIVIPGGVNATNGT) are Extracellular-facing. The short motif at 158 to 168 (IPGGVNATNGT) is the Involved in motor function element. 2 N-linked (GlcNAc...) asparagine glycosylation sites follow: Asn163 and Asn166. The chain crosses the membrane as a helical span at residues 169-196 (EARDALRVKVAMSVTLLSGIIQFCLGVC). The Cytoplasmic segment spans residues 197 to 206 (RFGFVAIYLT). The chain crosses the membrane as a helical span at residues 207 to 230 (EPLVRGFTTAAAVHVFTSMLKYLF). Residues 231–241 (GVKTKRYSGIF) lie on the Extracellular side of the membrane. The helical intramembrane region spans 242–253 (SVVYSTVAVLQN). The Extracellular portion of the chain corresponds to 254-258 (VKNLN). Residues 259 to 276 (VCSLGVGLMVFGLLLGGK) form a helical membrane-spanning segment. The Cytoplasmic portion of the chain corresponds to 277 to 291 (EFNERFKEKLPAPIP). The chain crosses the membrane as a helical span at residues 292–307 (LEFFAVVMGTGISAGF). Residues 308–332 (NLHESYSVDVVGTLPLGLLPPANPD) lie on the Extracellular side of the membrane. A helical membrane pass occupies residues 333–359 (TSLFHLVYVDAIAIAIVGFSVTISMAK). At 360-370 (TLANKHGYQVD) the chain is on the cytoplasmic side. Residues 371–388 (GNQELIALGICNSIGSLF) traverse the membrane as a helical segment. The Extracellular segment spans residues 389 to 396 (QTFSISCS). Residues 397-406 (LSRSLVQEGT) traverse the membrane as a helical segment. Ser398 serves as a coordination point for salicylate. The Cytoplasmic segment spans residues 407–410 (GGKT). Residues 411–431 (QLAGCLASLMILLVILATGFL) traverse the membrane as a helical segment. The Extracellular portion of the chain corresponds to 432-436 (FESLP). A helical transmembrane segment spans residues 437-464 (QAVLSAIVIVNLKGMFMQFSDLPFFWRT). Ser465 is a topological domain (cytoplasmic). The chain crosses the membrane as a helical span at residues 466-481 (KIELTIWLTTFVSSLF). Topologically, residues 482-484 (LGL) are extracellular. Residues 485–504 (DYGLITAVIIALLTVIYRTQ) form a helical membrane-spanning segment. The interval 505-718 (SPSYTVLGQL…AVLGSQVREA (214 aa)) is extended region for STAS domain. Topologically, residues 505 to 744 (SPSYTVLGQL…PNATPTTPEA (240 aa)) are cytoplasmic. Residues 525-713 (AYEEVKEIPG…HSIHDAVLGS (189 aa)) form the STAS domain. A disordered region spans residues 720–744 (AEQETTVLPPQEDMEPNATPTTPEA).

It belongs to the SLC26A/SulP transporter (TC 2.A.53) family. In terms of assembly, homodimer. Interacts (via STAS domain) with CALM; this interaction is calcium-dependent and the STAS domain interacts with only one lobe of CALM which is an elongated conformation. Interacts with MYH1. Specifically expressed in outer hair cells of cochleae (at protein level). Not detected in other cells of the organ of Corti.

The protein resides in the lateral cell membrane. It carries out the reaction 2 hydrogencarbonate(in) + chloride(out) = 2 hydrogencarbonate(out) + chloride(in). Its activity is regulated as follows. Salicylate, an inhibitor of outer hair cell motility, acts as a competitive antagonist at the prestin anion-binding site. Voltage-sensitive motor protein that drives outer hair cell (OHC) electromotility (eM) and participates in sound amplification in the hearing organ. Converts changes in the transmembrane electric potential into mechanical displacements resulting in the coupling of its expansion to movement of a charged voltage sensor across the lipid membrane. The nature of the voltage sensor is not completely clear, and two models compete. In the first model, acts as an incomplete transporter where intracellular chloride anion acts as extrinsic voltage sensor that drives conformational change in the protein which is sufficient to produce a length change in the plane of the membrane and hence in the length of the OHC. The second model in which multiple charged amino acid residues are distributed at the intracellular and extracellular membrane interfaces that form an intrinsic voltage sensor, whose movement produces the non-linear capacitance (NLC). However, the effective voltage sensor may be the result of a hybrid voltage sensor assembled from intrinsic charge (charged residues) and extrinsic charge (bound anion). Notably, binding of anions to the anion-binding pocket partially neutralizes the intrinsic positive charge rather than to form an electrically negative sensor, therefore remaining charge may serve as voltage sensor that, after depolarization, moves from down (expanded state) to up (contracted) conformation, which is accompanied by an eccentric contraction of the intermembrane cross-sectional area of the protein as well as a major increase in the hydrophobic thickness of the protein having as consequences the plasma membrane thickening and the cell contraction after membrane depolarization. The anion-binding pocket transits from the inward-open (Down) state, where it is exposed toward the intracellular solvent in the absence of anion, to the occluded (Up) state upon anion binding. Salicylate competes for the anion-binding site and inhibits the voltage-sensor movement, and therefore inhibits the charge transfer and electromotility by displacing Cl(-) from the anion-binding site and by preventing the structural transitions to the contracted state. In addition, can act as a weak Cl(-)/HCO3(-) antiporter across the cell membrane and so regulate the intracellular pH of the outer hair cells (OHCs), while firstly found as being unable to mediate electrogenic anion transport. Moreover, supports a role in cardiac mechanical amplification serving as an elastic element to enhance the actomyosin- based sarcomere contraction system. In Rattus norvegicus (Rat), this protein is Prestin.